A 200-amino-acid chain; its full sequence is Large ribosomal subunit protein uL4 (200 aa).

Positions 38–68 (GRQGSKQQKTRSDVRGGGKRPWRQKGTGRAR) are disordered. Positions 54 to 65 (GGKRPWRQKGTG) are enriched in basic residues.

The protein belongs to the universal ribosomal protein uL4 family. Part of the 50S ribosomal subunit.

Functionally, one of the primary rRNA binding proteins, this protein initially binds near the 5'-end of the 23S rRNA. It is important during the early stages of 50S assembly. It makes multiple contacts with different domains of the 23S rRNA in the assembled 50S subunit and ribosome. In terms of biological role, forms part of the polypeptide exit tunnel. This is Large ribosomal subunit protein uL4 from Pseudomonas syringae pv. tomato (strain ATCC BAA-871 / DC3000).